Reading from the N-terminus, the 171-residue chain is Large ribosomal subunit protein uL10 (171 aa).

This sequence belongs to the universal ribosomal protein uL10 family. In terms of assembly, part of the ribosomal stalk of the 50S ribosomal subunit. The N-terminus interacts with L11 and the large rRNA to form the base of the stalk. The C-terminus forms an elongated spine to which L12 dimers bind in a sequential fashion forming a multimeric L10(L12)X complex.

Forms part of the ribosomal stalk, playing a central role in the interaction of the ribosome with GTP-bound translation factors. The chain is Large ribosomal subunit protein uL10 from Zymomonas mobilis subsp. mobilis (strain ATCC 31821 / ZM4 / CP4).